The chain runs to 56 residues: UPF0391 membrane protein HCH_04387 (56 aa).

A run of 2 helical transmembrane segments spans residues 6–26 and 30–50; these read IVFF…IAAA and IAQI…IAGG.

It belongs to the UPF0391 family.

The protein localises to the cell membrane. The chain is UPF0391 membrane protein HCH_04387 from Hahella chejuensis (strain KCTC 2396).